The primary structure comprises 537 residues: Cytochrome P450 27C1 (537 aa).

Cysteine 483 provides a ligand contact to heme.

The protein belongs to the cytochrome P450 family. Requires heme as cofactor. In terms of tissue distribution, expressed in the dorsal third of retinal pigment epithelium, but not in the ventral counterpart (at protein level).

The protein localises to the membrane. The enzyme catalyses all-trans-retinol + 2 reduced [adrenodoxin] + O2 + 2 H(+) = all-trans-3,4-didehydroretinol + 2 oxidized [adrenodoxin] + 2 H2O. Functionally, efficiently catalyzes the conversion of all-trans retinol (also called vitamin A1, the precursor of 11-cis retinal) to 3,4-didehydroretinol (also called vitamin A2, the precursor of 11-cis 3,4-didehydroretinal), also acts on all-trans retinal and all-trans retinoic acid. The replacement of 11-cis retinal chromophore in photopigments with 11-cis 3,4-didehydroretinal enhances sensitivity to long-wavelength light. This may improve vision in fresh water which is often turbid. The chain is Cytochrome P450 27C1 (cyp27c1) from Aquarana catesbeiana (American bullfrog).